The sequence spans 419 residues: D-galactonate dehydratase family member SEN1436 (419 aa).

The substrate site is built by Gln-45 and His-129. Tyr-160 acts as the Proton donor/acceptor in catalysis. Mg(2+) is bound at residue Asp-225. The Proton donor/acceptor role is filled by His-227. 2 residues coordinate Mg(2+): Glu-251 and Glu-277. Substrate contacts are provided by Glu-277, Arg-298, His-327, Asp-331, and Glu-354.

The protein belongs to the mandelate racemase/muconate lactonizing enzyme family. GalD subfamily. As to quaternary structure, homotetramer. Mg(2+) serves as cofactor.

It catalyses the reaction D-gluconate = 2-dehydro-3-deoxy-D-gluconate + H2O. Functionally, has low D-gluconate dehydratase activity (in vitro), suggesting that it has no significant role in D-gluconate degradation in vivo. Has no detectable activity with a panel of 70 other acid sugars (in vitro). The chain is D-galactonate dehydratase family member SEN1436 from Salmonella enteritidis PT4 (strain P125109).